The chain runs to 569 residues: Beta-lactamase-like protein 4 (569 aa).

Residues Met1–Ser19 form the signal peptide. 13 N-linked (GlcNAc...) asparagine glycosylation sites follow: Asn87, Asn172, Asn239, Asn240, Asn250, Asn299, Asn343, Asn412, Asn419, Asn436, Asn468, Asn509, and Asn535.

The protein belongs to the beta-lactamase family.

The protein localises to the secreted. This Dictyostelium discoideum (Social amoeba) protein is Beta-lactamase-like protein 4.